Reading from the N-terminus, the 607-residue chain is Hemagglutinin glycoprotein (607 aa).

The Intravirion segment spans residues 1-37 (MLSYQDKAGAFYKDNARANSTKLSLVTEEHGGRRPPY). Residues 38–58 (LLFVLLVLLVGILALLAITGV) form a helical membrane-spanning segment. The Virion surface portion of the chain corresponds to 59–607 (RFHQVSTSNM…IRFSCNRSNP (549 aa)). Residues Asn-149, Asn-391, Asn-422, Asn-456, Asn-587, and Asn-603 are each glycosylated (N-linked (GlcNAc...) asparagine; by host).

It belongs to the paramyxoviruses hemagglutinin-neuraminidase family. Non-sialidase subfamily. Binds canine SLAMF1 at the cell surface.

The protein resides in the virion membrane. It localises to the host cell membrane. Attaches the virus to cell receptors and thereby initiating infection. Binding of H protein to the receptor induces a conformational change that allows the F protein to trigger virion/cell membranes fusion. The cellular receptor might be SLAM, and may explain the lymphotropism of the virus. The protein is Hemagglutinin glycoprotein (H) of Ailuropoda melanoleuca (Giant panda).